Here is a 325-residue protein sequence, read N- to C-terminus: Lipoyl synthase (325 aa).

[4Fe-4S] cluster contacts are provided by C71, C76, C82, C97, C101, C104, and S311. One can recognise a Radical SAM core domain in the interval 83–300 (FSGGTATFMI…ERQALAMGFT (218 aa)).

Belongs to the radical SAM superfamily. Lipoyl synthase family. It depends on [4Fe-4S] cluster as a cofactor.

Its subcellular location is the cytoplasm. It carries out the reaction [[Fe-S] cluster scaffold protein carrying a second [4Fe-4S](2+) cluster] + N(6)-octanoyl-L-lysyl-[protein] + 2 oxidized [2Fe-2S]-[ferredoxin] + 2 S-adenosyl-L-methionine + 4 H(+) = [[Fe-S] cluster scaffold protein] + N(6)-[(R)-dihydrolipoyl]-L-lysyl-[protein] + 4 Fe(3+) + 2 hydrogen sulfide + 2 5'-deoxyadenosine + 2 L-methionine + 2 reduced [2Fe-2S]-[ferredoxin]. It functions in the pathway protein modification; protein lipoylation via endogenous pathway; protein N(6)-(lipoyl)lysine from octanoyl-[acyl-carrier-protein]: step 2/2. Its function is as follows. Catalyzes the radical-mediated insertion of two sulfur atoms into the C-6 and C-8 positions of the octanoyl moiety bound to the lipoyl domains of lipoate-dependent enzymes, thereby converting the octanoylated domains into lipoylated derivatives. This chain is Lipoyl synthase, found in Methylobacillus flagellatus (strain ATCC 51484 / DSM 6875 / VKM B-1610 / KT).